Consider the following 1297-residue polypeptide: DNA-directed RNA polymerase subunit beta' (1297 aa).

Positions 60, 62, 75, and 78 each coordinate Zn(2+). Positions 535, 537, and 539 each coordinate Mg(2+). Zn(2+)-binding residues include C883, C961, C968, and C971.

The protein belongs to the RNA polymerase beta' chain family. In terms of assembly, the RNAP catalytic core consists of 2 alpha, 1 beta, 1 beta' and 1 omega subunit. When a sigma factor is associated with the core the holoenzyme is formed, which can initiate transcription. It depends on Mg(2+) as a cofactor. Zn(2+) serves as cofactor.

It carries out the reaction RNA(n) + a ribonucleoside 5'-triphosphate = RNA(n+1) + diphosphate. Its function is as follows. DNA-dependent RNA polymerase catalyzes the transcription of DNA into RNA using the four ribonucleoside triphosphates as substrates. The chain is DNA-directed RNA polymerase subunit beta' from Salinispora arenicola (strain CNS-205).